A 231-amino-acid chain; its full sequence is L-ribulose-5-phosphate 4-epimerase (231 aa).

Substrate-binding positions include 27 to 28 (GN), 44 to 45 (SG), and 74 to 75 (SS). Residues Asp76, His95, and His97 each coordinate Zn(2+). The Proton donor/acceptor role is filled by Asp120. His171 lines the Zn(2+) pocket. Catalysis depends on Tyr229, which acts as the Proton donor/acceptor.

This sequence belongs to the aldolase class II family. AraD/FucA subfamily. Homotetramer. Zn(2+) is required as a cofactor.

The catalysed reaction is L-ribulose 5-phosphate = D-xylulose 5-phosphate. It participates in carbohydrate degradation; L-arabinose degradation via L-ribulose; D-xylulose 5-phosphate from L-arabinose (bacterial route): step 3/3. Involved in the degradation of L-arabinose. Catalyzes the interconversion of L-ribulose 5-phosphate (LRu5P) and D-xylulose 5-phosphate (D-Xu5P) via a retroaldol/aldol mechanism (carbon-carbon bond cleavage analogous to a class II aldolase reaction). This is L-ribulose-5-phosphate 4-epimerase from Salmonella typhimurium (strain LT2 / SGSC1412 / ATCC 700720).